A 246-amino-acid chain; its full sequence is Acetylglutamate kinase (246 aa).

Residues 30 to 31, Arg52, and Asn151 each bind substrate; that span reads GG.

This sequence belongs to the acetylglutamate kinase family. ArgB subfamily.

The protein localises to the cytoplasm. The enzyme catalyses N-acetyl-L-glutamate + ATP = N-acetyl-L-glutamyl 5-phosphate + ADP. Its pathway is amino-acid biosynthesis; L-arginine biosynthesis; N(2)-acetyl-L-ornithine from L-glutamate: step 2/4. Its function is as follows. Catalyzes the ATP-dependent phosphorylation of N-acetyl-L-glutamate. The chain is Acetylglutamate kinase from Methanopyrus kandleri (strain AV19 / DSM 6324 / JCM 9639 / NBRC 100938).